Here is a 719-residue protein sequence, read N- to C-terminus: Solute carrier family 15 member 2 (719 aa).

Topologically, residues 1–43 (MGKMKDKDVDAEKYEKAQRSPKLCGTNYPVSIAFIVVNEFCER) are cytoplasmic. The chain crosses the membrane as a helical span at residues 44–61 (FSYYGMKAVLTLYFMNYL). Residues 62-69 (HWDKNLST) lie on the Extracellular side of the membrane. N-linked (GlcNAc...) asparagine glycosylation occurs at Asn66. A helical membrane pass occupies residues 70–90 (AIYHAFSGLCYFTPLLGALIA). Topologically, residues 91–99 (DSWLGKFKT) are cytoplasmic. The helical transmembrane segment at 100–120 (IIYLSIVYVIGHVVKSVGAIP) threads the bilayer. Over 121 to 125 (DVGDS) the chain is Extracellular. The chain crosses the membrane as a helical span at residues 126-146 (TVHIALSMVGLGLIALGTGGI). Residues 147-169 (KPCVAAFGGDQFDEDNIDERRKF) lie on the Cytoplasmic side of the membrane. The chain crosses the membrane as a helical span at residues 170-190 (FSIFYMSINAGSVLSTIITPI). Residues 191–201 (LRGDVQCFGGD) are Extracellular-facing. A helical membrane pass occupies residues 202 to 222 (CYALAFGVPAALMVIALVVFI). Topologically, residues 223–280 (SGSGLYKKSPPEGNVLVRVCKCIGFAISNRWTNSKKSPKRSHWLDWAEEKYSKRLIQE) are cytoplasmic. The helical transmembrane segment at 281–301 (IKMVCRVLVLYIPLPMFWALF) threads the bilayer. Residues 302-334 (DQQGSRWTLQATRMNMDFGGGFIIKPDQMQMLN) lie on the Extracellular side of the membrane. A helical membrane pass occupies residues 335 to 355 (ALLILVFIPIFDMGIYPLVGL). The Cytoplasmic portion of the chain corresponds to 356-367 (CRIKLTPLKKMA). A helical transmembrane segment spans residues 368-388 (TGMILAALAFCAATAVEVYVI). The Extracellular portion of the chain corresponds to 389–594 (KTVVEPPPAK…QANNIHIGWQ (206 aa)). Residues 389–594 (KTVVEPPPAK…QANNIHIGWQ (206 aa)) form an extracellular domain (ECD) region. Residues Asn481, Asn513, and Asn532 are each glycosylated (N-linked (GlcNAc...) asparagine). The chain crosses the membrane as a helical span at residues 595–615 (IPQYVFLTAGEVMFSITGLEF). Residues 616–626 (SYSQAPASMKS) are Cytoplasmic-facing. A helical membrane pass occupies residues 627 to 647 (VLQAGWLMTVAFGNVIVLIVA). Topologically, residues 648–657 (EGAGMEQWVE) are extracellular. A helical transmembrane segment spans residues 658–678 (FLLFAALLVAVSIIFSIMAYF). At 679 to 719 (YTYVDPDQLDKLFKEDGDGGKVESSKKDELSLGDMPKQTKM) the chain is on the cytoplasmic side. Residues 695 to 708 (GDGGKVESSKKDEL) are compositionally biased toward basic and acidic residues. The tract at residues 695-719 (GDGGKVESSKKDELSLGDMPKQTKM) is disordered.

This sequence belongs to the major facilitator superfamily. Proton-dependent oligopeptide transporter (POT/PTR) (TC 2.A.17) family. As to expression, expressed in kidney, brain and gut. Also expressed weakly in eye, gill and skeletal muscle.

It localises to the apical cell membrane. Its subcellular location is the cytoplasmic vesicle. The protein localises to the phagosome membrane. The protein resides in the cell membrane. It catalyses the reaction a dipeptide(out) + 2 H(+)(out) = a dipeptide(in) + 2 H(+)(in). The catalysed reaction is N-acetyl-D-muramoyl-L-alanyl-D-isoglutamine(out) + 3 H(+)(out) = N-acetyl-D-muramoyl-L-alanyl-D-isoglutamine(in) + 3 H(+)(in). The enzyme catalyses glycyl-L-leucine(out) + 2 H(+)(out) = glycyl-L-leucine(in) + 2 H(+)(in). It carries out the reaction glycyl-L-lysine(out) + 2 H(+)(out) = glycyl-L-lysine(in) + 2 H(+)(in). It catalyses the reaction glycyl-L-glutamate(out) + 3 H(+)(out) = glycyl-L-glutamate(in) + 3 H(+)(in). The catalysed reaction is L-alanyl-L-alanine(out) + 2 H(+)(out) = L-alanyl-L-alanine(in) + 2 H(+)(in). The enzyme catalyses an L-amino acid tripeptide(out) + 2 H(+)(out) = an L-amino acid tripeptide(in) + 2 H(+)(in). It carries out the reaction carnosine(out) + 2 H(+)(out) = carnosine(in) + 2 H(+)(in). Proton-coupled amino-acid transporter that transports oligopeptides of 2 to 4 amino acids with a preference for dipeptides. Transports neutral and anionic dipeptides with a proton to peptide stoichiometry of 2:1 or 3:1. The sequence is that of Solute carrier family 15 member 2 from Danio rerio (Zebrafish).